The chain runs to 454 residues: Bifunctional protein GlmU (454 aa).

Residues 1-228 form a pyrophosphorylase region; sequence MSPLHVVILA…PFEVQGVNNR (228 aa). Residues 9–12, Lys23, Gln74, 79–80, 101–103, Gly138, Glu153, Asn168, and Asn226 each bind UDP-N-acetyl-alpha-D-glucosamine; these read LAAG, GT, and YGD. Residue Asp103 participates in Mg(2+) binding. Asn226 lines the Mg(2+) pocket. Residues 229 to 249 are linker; the sequence is LQLAELERWYQRQQAERLMTE. Residues 250–454 are N-acetyltransferase; the sequence is GASLADPARI…IAGWERPKKA (205 aa). Positions 332 and 350 each coordinate UDP-N-acetyl-alpha-D-glucosamine. His362 serves as the catalytic Proton acceptor. Residues Tyr365 and Asn376 each contribute to the UDP-N-acetyl-alpha-D-glucosamine site. Acetyl-CoA is bound by residues Ala379, 385 to 386, Ser404, Ala422, and Arg439; that span reads NY.

It in the N-terminal section; belongs to the N-acetylglucosamine-1-phosphate uridyltransferase family. In the C-terminal section; belongs to the transferase hexapeptide repeat family. In terms of assembly, homotrimer. Mg(2+) is required as a cofactor.

Its subcellular location is the cytoplasm. The enzyme catalyses alpha-D-glucosamine 1-phosphate + acetyl-CoA = N-acetyl-alpha-D-glucosamine 1-phosphate + CoA + H(+). It carries out the reaction N-acetyl-alpha-D-glucosamine 1-phosphate + UTP + H(+) = UDP-N-acetyl-alpha-D-glucosamine + diphosphate. The protein operates within nucleotide-sugar biosynthesis; UDP-N-acetyl-alpha-D-glucosamine biosynthesis; N-acetyl-alpha-D-glucosamine 1-phosphate from alpha-D-glucosamine 6-phosphate (route II): step 2/2. It functions in the pathway nucleotide-sugar biosynthesis; UDP-N-acetyl-alpha-D-glucosamine biosynthesis; UDP-N-acetyl-alpha-D-glucosamine from N-acetyl-alpha-D-glucosamine 1-phosphate: step 1/1. It participates in bacterial outer membrane biogenesis; LPS lipid A biosynthesis. Functionally, catalyzes the last two sequential reactions in the de novo biosynthetic pathway for UDP-N-acetylglucosamine (UDP-GlcNAc). The C-terminal domain catalyzes the transfer of acetyl group from acetyl coenzyme A to glucosamine-1-phosphate (GlcN-1-P) to produce N-acetylglucosamine-1-phosphate (GlcNAc-1-P), which is converted into UDP-GlcNAc by the transfer of uridine 5-monophosphate (from uridine 5-triphosphate), a reaction catalyzed by the N-terminal domain. This Marinobacter nauticus (strain ATCC 700491 / DSM 11845 / VT8) (Marinobacter aquaeolei) protein is Bifunctional protein GlmU.